Reading from the N-terminus, the 500-residue chain is Citrate lyase alpha chain (500 aa).

Oligomer with a subunit composition of (alpha,beta,gamma)6.

It is found in the cytoplasm. The enzyme catalyses citrate = oxaloacetate + acetate. It catalyses the reaction citrate + acetyl-CoA = (3S)-citryl-CoA + acetate. Its function is as follows. Represents a citrate:acetyl-ACP transferase. This chain is Citrate lyase alpha chain (citF), found in Haemophilus influenzae (strain ATCC 51907 / DSM 11121 / KW20 / Rd).